The primary structure comprises 436 residues: Glutamate-1-semialdehyde 2,1-aminomutase (436 aa).

Residue Lys274 is modified to N6-(pyridoxal phosphate)lysine.

The protein belongs to the class-III pyridoxal-phosphate-dependent aminotransferase family. HemL subfamily. Homodimer. Requires pyridoxal 5'-phosphate as cofactor.

Its subcellular location is the cytoplasm. The catalysed reaction is (S)-4-amino-5-oxopentanoate = 5-aminolevulinate. Its pathway is porphyrin-containing compound metabolism; protoporphyrin-IX biosynthesis; 5-aminolevulinate from L-glutamyl-tRNA(Glu): step 2/2. This chain is Glutamate-1-semialdehyde 2,1-aminomutase, found in Albidiferax ferrireducens (strain ATCC BAA-621 / DSM 15236 / T118) (Rhodoferax ferrireducens).